We begin with the raw amino-acid sequence, 258 residues long: Pimeloyl-[acyl-carrier protein] methyl ester esterase (258 aa).

The 227-residue stretch at 16 to 242 (LVLLHGWGLN…AAHAPFISHP (227 aa)) folds into the AB hydrolase-1 domain. Residues W22, 82–83 (SM), and 143–147 (FLALQ) each bind substrate. S82 serves as the catalytic Nucleophile. Catalysis depends on residues D207 and H235. Residue H235 coordinates substrate.

The protein belongs to the AB hydrolase superfamily. Carboxylesterase BioH family. As to quaternary structure, monomer.

It is found in the cytoplasm. The enzyme catalyses 6-carboxyhexanoyl-[ACP] methyl ester + H2O = 6-carboxyhexanoyl-[ACP] + methanol + H(+). The protein operates within cofactor biosynthesis; biotin biosynthesis. Its function is as follows. The physiological role of BioH is to remove the methyl group introduced by BioC when the pimeloyl moiety is complete. It allows to synthesize pimeloyl-ACP via the fatty acid synthetic pathway through the hydrolysis of the ester bonds of pimeloyl-ACP esters. The chain is Pimeloyl-[acyl-carrier protein] methyl ester esterase from Yersinia pseudotuberculosis serotype IB (strain PB1/+).